The chain runs to 252 residues: Fructose-1,6-bisphosphatase/inositol-1-monophosphatase (252 aa).

Mg(2+) is bound by residues Asp38, Thr40, Glu67, Asp82, Leu84, and Asp85. Substrate-binding positions include 85–87, Arg167, Ala172, and Arg191; that span reads DGT. Residue Asp200 participates in Mg(2+) binding.

The protein belongs to the inositol monophosphatase superfamily. FBPase class 4 family. Homodimer. Mg(2+) is required as a cofactor. Mn(2+) serves as cofactor.

The catalysed reaction is beta-D-fructose 1,6-bisphosphate + H2O = beta-D-fructose 6-phosphate + phosphate. The enzyme catalyses a myo-inositol phosphate + H2O = myo-inositol + phosphate. Both FBPase and IMPase activities are inhibited by Ca(2+). In contrast to mammalian I-1-P phosphatases, is only very weakly inhibited by Li(+) (with an IC(50) of about 290 mM). Phosphatase with broad specificity; it can dephosphorylate fructose 1,6-bisphosphate, both D and L isomers of inositol-1-phosphate (I-1-P), 2'-AMP, pNPP, inositol-2-phosphate, beta-glycerol phosphate, and alpha-D-glucose-1-phosphate. Cannot hydrolyze glucose-6-phosphate and fructose-6-phosphate. May be involved in the biosynthesis of a unique osmolyte, di-myo-inositol 1,1-phosphate. This chain is Fructose-1,6-bisphosphatase/inositol-1-monophosphatase (suhB), found in Archaeoglobus fulgidus (strain ATCC 49558 / DSM 4304 / JCM 9628 / NBRC 100126 / VC-16).